The primary structure comprises 325 residues: Tagatose 1,6-diphosphate aldolase 1 (325 aa).

This sequence belongs to the aldolase LacD family.

It catalyses the reaction D-tagatofuranose 1,6-bisphosphate = D-glyceraldehyde 3-phosphate + dihydroxyacetone phosphate. The protein operates within carbohydrate metabolism; D-tagatose 6-phosphate degradation; D-glyceraldehyde 3-phosphate and glycerone phosphate from D-tagatose 6-phosphate: step 2/2. This Streptococcus pyogenes serotype M3 (strain ATCC BAA-595 / MGAS315) protein is Tagatose 1,6-diphosphate aldolase 1 (lacD1).